The primary structure comprises 157 residues: Transcriptional repressor NrdR (157 aa).

The segment at 3 to 34 (CPHCHQNSSRVIDSRPTDEGRVIRRRRECENC) is a zinc-finger region. One can recognise an ATP-cone domain in the interval 49–139 (LLVIKKNGTR…VYRQFKDMNV (91 aa)).

Belongs to the NrdR family. Zn(2+) is required as a cofactor.

In terms of biological role, negatively regulates transcription of bacterial ribonucleotide reductase nrd genes and operons by binding to NrdR-boxes. In Latilactobacillus sakei subsp. sakei (strain 23K) (Lactobacillus sakei subsp. sakei), this protein is Transcriptional repressor NrdR.